A 1400-amino-acid chain; its full sequence is DNA-directed RNA polymerase subunit beta' (1400 aa).

Cysteine 70, cysteine 72, cysteine 85, and cysteine 88 together coordinate Zn(2+). The Mg(2+) site is built by aspartate 460, aspartate 462, and aspartate 464. Residues cysteine 814, cysteine 888, cysteine 895, and cysteine 898 each contribute to the Zn(2+) site. Residues 1368–1400 (RQAKRAEAQEGPSAEQATDNLAALLNAGFSSDE) are disordered.

The protein belongs to the RNA polymerase beta' chain family. As to quaternary structure, the RNAP catalytic core consists of 2 alpha, 1 beta, 1 beta' and 1 omega subunit. When a sigma factor is associated with the core the holoenzyme is formed, which can initiate transcription. It depends on Mg(2+) as a cofactor. Zn(2+) serves as cofactor.

It catalyses the reaction RNA(n) + a ribonucleoside 5'-triphosphate = RNA(n+1) + diphosphate. In terms of biological role, DNA-dependent RNA polymerase catalyzes the transcription of DNA into RNA using the four ribonucleoside triphosphates as substrates. The chain is DNA-directed RNA polymerase subunit beta' from Vibrio parahaemolyticus serotype O3:K6 (strain RIMD 2210633).